The primary structure comprises 268 residues: Tryptophan synthase alpha chain (268 aa).

Catalysis depends on proton acceptor residues Glu-49 and Asp-60.

Belongs to the TrpA family. As to quaternary structure, tetramer of two alpha and two beta chains.

It carries out the reaction (1S,2R)-1-C-(indol-3-yl)glycerol 3-phosphate + L-serine = D-glyceraldehyde 3-phosphate + L-tryptophan + H2O. Its pathway is amino-acid biosynthesis; L-tryptophan biosynthesis; L-tryptophan from chorismate: step 5/5. In terms of biological role, the alpha subunit is responsible for the aldol cleavage of indoleglycerol phosphate to indole and glyceraldehyde 3-phosphate. This is Tryptophan synthase alpha chain from Xanthomonas oryzae pv. oryzae (strain MAFF 311018).